The following is a 241-amino-acid chain: Platelet-derived growth factor subunit B (241 aa).

The N-terminal stretch at methionine 1 to alanine 20 is a signal peptide. Residues glutamate 21–arginine 81 constitute a propeptide, removed in mature form. Residue asparagine 63 is glycosylated (N-linked (GlcNAc...) asparagine). Cystine bridges form between cysteine 97–cysteine 141, cysteine 130–cysteine 178, and cysteine 134–cysteine 180. A propeptide spans arginine 191–alanine 241 (removed in mature form). The span at arginine 217–histidine 230 shows a compositional bias: basic residues. Positions arginine 217–alanine 241 are disordered.

Belongs to the PDGF/VEGF growth factor family. In terms of assembly, antiparallel homodimer; disulfide-linked. Antiparallel heterodimer with PDGFA; disulfide-linked. The PDGFB homodimer interacts with PDGFRA and PDGFRB homodimers, and with heterodimers formed by PDGFRA and PDGFRB. The heterodimer composed of PDGFA and PDGFB interacts with PDGFRB homodimers, and with heterodimers formed by PDGFRA and PDGFRB. Interacts with XLKD1. Interacts with LRP1. Interacts with SORL1 (via the N-terminal ectodomain). Interacts with CD82; this interaction inhibits PDGFB-mediated signaling pathway. As to expression, localized to vascular smooth muscle cells. Also weakly expressed by cortical interstitial cells but absent in tubules. Up-regulated in areas of renal fibrosis. In mice with unilateral ureteral obstruction, an increased expression in interstitial cells and in some tubules observed after day 4.

The protein resides in the secreted. Its function is as follows. Growth factor that plays an essential role in the regulation of embryonic development, cell proliferation, cell migration, survival and chemotaxis. Potent mitogen for cells of mesenchymal origin. Required for normal proliferation and recruitment of pericytes and vascular smooth muscle cells in the central nervous system, skin, lung, heart and placenta. Required for normal blood vessel development, and for normal development of kidney glomeruli. Plays an important role in wound healing. Signaling is modulated by the formation of heterodimers with PDGFA. In Mus musculus (Mouse), this protein is Platelet-derived growth factor subunit B (Pdgfb).